The chain runs to 198 residues: HTH-type transcriptional regulator BetI (198 aa).

The 61-residue stretch at 8-68 (PLRRRELIDA…ATMRHLLREL (61 aa)) folds into the HTH tetR-type domain. A DNA-binding region (H-T-H motif) is located at residues 31-50 (TVAQIAHEAGVSPALAHHYF).

It functions in the pathway amine and polyamine biosynthesis; betaine biosynthesis via choline pathway [regulation]. Functionally, repressor involved in the biosynthesis of the osmoprotectant glycine betaine. It represses transcription of the choline transporter BetT and the genes of BetAB involved in the synthesis of glycine betaine. This chain is HTH-type transcriptional regulator BetI, found in Brucella suis (strain ATCC 23445 / NCTC 10510).